The chain runs to 862 residues: DNA replication licensing factor MCM4 (862 aa).

Residues Met-1–Arg-10 are compositionally biased toward low complexity. 2 disordered regions span residues Met-1–Pro-71 and Thr-90–Arg-121. An N-acetylserine modification is found at Ser-2. Ser-6 is modified (phosphoserine). Phosphothreonine is present on residues Thr-7 and Thr-19. A phosphoserine mark is found at Ser-26, Ser-31, and Ser-32. Polar residues predominate over residues Pro-61 to Pro-71. Residue Thr-101 is modified to Phosphothreonine. Ser-104 carries the post-translational modification Phosphoserine. At Thr-109 the chain carries Phosphothreonine. Residues Ser-119, Ser-130, Ser-141, and Ser-144 each carry the phosphoserine modification. Residue Lys-219 is modified to N6-acetyllysine. Lys-438 is covalently cross-linked (Glycyl lysine isopeptide (Lys-Gly) (interchain with G-Cter in SUMO2)). Lys-449 bears the N6-acetyllysine mark. The MCM domain maps to Ile-457–Val-666. Residues Tyr-470, Arg-496, Lys-515, Ser-516, Asn-617, Arg-642, Arg-731, and Glu-734 each coordinate ATP. The short motif at Ser-641–Asp-644 is the Arginine finger element. A Glycyl lysine isopeptide (Lys-Gly) (interchain with G-Cter in SUMO2) cross-link involves residue Lys-797. N6-acetyllysine is present on Lys-857.

This sequence belongs to the MCM family. As to quaternary structure, component of the MCM2-7 complex. The complex forms a toroidal hexameric ring with the proposed subunit order MCM2-MCM6-MCM4-MCM7-MCM3-MCM5. Component of the CMG helicase complex, a hexameric ring of related MCM2-7 subunits stabilized by CDC45 and the tetrameric GINS complex. Interacts with MCMBP. Sumoylated; SUMO2 modified in response to stress caused by inhibition of proteasome activity (in vitro).

The protein resides in the nucleus. It is found in the chromosome. It catalyses the reaction ATP + H2O = ADP + phosphate + H(+). Functionally, acts as a component of the MCM2-7 complex (MCM complex) which is the replicative helicase essential for 'once per cell cycle' DNA replication initiation and elongation in eukaryotic cells. Core component of CDC45-MCM-GINS (CMG) helicase, the molecular machine that unwinds template DNA during replication, and around which the replisome is built. The active ATPase sites in the MCM2-7 ring are formed through the interaction surfaces of two neighboring subunits such that a critical structure of a conserved arginine finger motif is provided in trans relative to the ATP-binding site of the Walker A box of the adjacent subunit. The six ATPase active sites, however, are likely to contribute differentially to the complex helicase activity. The protein is DNA replication licensing factor MCM4 (Mcm4) of Mus musculus (Mouse).